The chain runs to 309 residues: Phytoene synthase (309 aa).

Belongs to the phytoene/squalene synthase family.

It carries out the reaction 2 (2E,6E,10E)-geranylgeranyl diphosphate = 15-cis-phytoene + 2 diphosphate. The protein operates within carotenoid biosynthesis; phytoene biosynthesis; all-trans-phytoene from geranylgeranyl diphosphate: step 1/1. Catalyzes the reaction from prephytoene diphosphate to phytoene. The sequence is that of Phytoene synthase (crtB) from Arthrospira platensis (Spirulina platensis).